The sequence spans 2024 residues: Pericentriolar material 1 protein (2024 aa).

Residues 1–92 are disordered; that stretch reads MATGGGPFED…FPHSRYMSQM (92 aa). The residue at position 2 (A2) is an N-acetylalanine. A mediates interaction with DZIP1 region spans residues 2 to 1460; sequence ATGGGPFEDG…TWIASNSELT (1459 aa). The segment covering 43 to 61 has biased composition (basic and acidic residues); sequence RSSEKNKKKFGVESDKRVT. 7 positions are modified to phosphoserine: S65, S68, S69, S93, S110, S116, and S119. The tract at residues 111 to 163 is disordered; the sequence is DLDQRSIGSDSQGRATAANNKRQLSENRKPFNFLPMQINTNKSKDASTNPPNR. Polar residues-rich tracts occupy residues 116 to 132 and 147 to 163; these read SIGSDSQGRATAANNKR and QINTNKSKDASTNPPNR. The residue at position 159 (N159) is a Phosphoserine; in variant Ser-159. The stretch at 218–301 forms a coiled coil; the sequence is KASSMREDLV…QLRALQGRQA (84 aa). Residues 354-392 are disordered; sequence RDSQPPAVPDNRRQAESLSLTREVSQSRKPSASERLPDE. Residues 369–383 are compositionally biased toward polar residues; the sequence is ESLSLTREVSQSRKP. Residue S370 is modified to Phosphoserine. S372 is subject to Phosphoserine; by PLK4. S384 is modified (phosphoserine). An N6-acetyllysine modification is found at K399. Positions 400–424 form a coiled coil; the sequence is MRVLQEKKQKMDKLLGELHTLRDQH. 2 disordered regions span residues 421 to 492 and 523 to 548; these read RDQH…KLQK and ENRKDEETEESEYDSEHENSEPVTNI. Composition is skewed to polar residues over residues 425–445 and 456–477; these read LNNSSSSPQRSVDQRSTSAPS and GESNSLTSSVPYPTASLVSQNE. A coiled-coil region spans residues 487-543; the sequence is SEKLQKLNEVRKRLNELRELVHYYEQTSDMMTDAVNENRKDEETEESEYDSEHENSE. S588 is subject to Phosphoserine. 2 disordered regions span residues 614–652 and 699–726; these read HVAQGEDDEEEEEEAEEEGVSGASLSSHRSSLVDEHPED and FYPAEEDTKQNSNNTRGNANKTQKDTGV. Acidic residues predominate over residues 618–632; the sequence is GEDDEEEEEEAEEEG. Residues 634–643 show a composition bias toward low complexity; the sequence is SGASLSSHRS. Phosphoserine is present on S643. Residues 651 to 682 are a coiled coil; that stretch reads EDAEFEQKINRLMAAKQKLRQLQDLVAMVQDD. Residues 708–719 show a composition bias toward polar residues; that stretch reads QNSNNTRGNANK. 2 coiled-coil regions span residues 726 to 769 and 824 to 858; these read VNEK…LQTA and SEMRRHEMLREELRQRRKQLEALMAEHQRRQGLAE. Phosphothreonine is present on T859. Residues S861, S866, S869, and S872 each carry the phosphoserine modification. A Phosphothreonine modification is found at T877. The tract at residues 915 to 947 is disordered; the sequence is TDEEEEEEQDASSNDNFSVCPSNSVNHNSYNGK. Over residues 925–946 the composition is skewed to polar residues; the sequence is ASSNDNFSVCPSNSVNHNSYNG. 4 positions are modified to phosphoserine: S960, S977, S988, and S991. Residues 1063–1089 adopt a coiled-coil conformation; that stretch reads TQLTWQQNNVQRLKQMLNELMRQQNQH. Disordered stretches follow at residues 1085-1109 and 1152-1211; these read QQNQHPEKPGGKERGSSASHPPSPS and FSQN…RTPW. Basic and acidic residues predominate over residues 1089-1099; it reads HPEKPGGKERG. Positions 1152-1173 are enriched in polar residues; that stretch reads FSQNISTPSEQQQPLAQNSSGK. S1185 and S1188 each carry phosphoserine. Residues 1192–1201 are compositionally biased toward basic and acidic residues; the sequence is EKPRNKKLPE. 2 positions are modified to phosphoserine: S1229 and S1231. The segment covering 1232–1246 has biased composition (polar residues); the sequence is VEKSTSSNRKNQLDT. The disordered stretch occupies residues 1232-1342; sequence VEKSTSSNRK…RHSAQTEEPV (111 aa). Phosphoserine is present on residues S1257, S1260, S1262, and S1263. Residues 1279–1799 form an interaction with HAP1 region; sequence TRKASAQASL…TQALTNYGSG (521 aa). Positions 1296–1313 are enriched in basic residues; sequence KSKSKKRNSTQLKSRVKN. Residues S1318 and S1320 each carry the phosphoserine modification. T1468 is subject to Phosphothreonine. A coiled-coil region spans residues 1515–1539; the sequence is IHLDQALARMREYERMKTEAESNSN. Residues S1573, S1697, S1730, S1765, S1768, S1776, and S1782 each carry the phosphoserine modification. Disordered regions lie at residues 1725–1868 and 1880–1944; these read LEDH…NNCP and EQPL…PVLV. The span at 1768–1777 shows a compositional bias: acidic residues; it reads SDQEEDEESE. A compositionally biased stretch (polar residues) spans 1783–1797; sequence INLSKAETQALTNYG. Over residues 1799–1815 the composition is skewed to acidic residues; it reads GEDENEDEEMEEFEEGP. Residues 1818-1827 show a composition bias toward polar residues; that stretch reads VQTSLQANTE. A compositionally biased stretch (basic and acidic residues) spans 1835–1860; sequence DEQVLQRDFKKTAESKNVPLEREATS. The segment covering 1905-1916 has biased composition (low complexity); that stretch reads PLRLPEMEPLVP. The interval 1913 to 2024 is interaction with BBS4; the sequence is PLVPRVKEVK…EPETVGAQSI (112 aa). The segment covering 1924–1933 has biased composition (polar residues); the sequence is AQETPESSLA. S1958 and S1977 each carry phosphoserine. Positions 2005 to 2024 are disordered; it reads ELAGNSETLKEPETVGAQSI.

This sequence belongs to the PCM1 family. Self-associates. Interacts with C2CD3. Interacts with BBS4, BBS8, CETN3, HAP1, NDE1, NDEL1, MAP1LC3B, GABARAPAL2, and GABARAP. Interacts with CEP131; the interaction increases in response to ultraviolet light (UV) radiation. Associates with microtubule; association to microtubule is reduced in response to cellular stress, such as ultraviolet light (UV) radiation or heat shock, in a process that requires p38 MAP kinase signaling. Interacts with CFAP263. Interacts with SSX2IP. Interacts with CCDC13. Interacts with CEP290. Interacts with PARD6A. Interacts with KIAA0753/OFIP, CEP20/FOR20 and OFD1; the interaction with CEP20/FOR20 and OFD1 may be mediated by KIAA0753/OFIP. Interacts with CCDC66. Interacts with CCDC61. Interacts with DZIP1; localizes DZIP1 and the associated BBSome to centriolar satellite. Interacts with CSTPP1, TTLL1, TPGS1 and LRRC49. Interacts with CFAP53. In terms of processing, ubiquitinated. Undergoes monoubiquitination catalyzed by the E3 ubiquitin-protein ligase MIB1 in proliferating cells, preventing cilia formation. Monoubiquitination by MIB1 is inhibited in response to cellular stress, such as ultraviolet light (UV) radiation or heat shock, resulting in cilia formation initiation. Variant Ser-159 is phosphorylated. Post-translationally, phosphorylated on multiple serine and threonine residues by DYRK3 during the G2-to-M transition, after the nuclear-envelope breakdown. Phosphorylation by DYRK3 promotes disassembly of pericentriolar material. Phosphorylation at Ser-372 mediated by PLK4 is required to maintain the integrity of centriolar satellites. As to expression, expressed in blood, bone marrow, breast, lymph node, ovary and thyroid.

The protein resides in the cytoplasm. It localises to the cytoskeleton. The protein localises to the microtubule organizing center. It is found in the centrosome. Its subcellular location is the cytoplasmic granule. The protein resides in the centriolar satellite. It localises to the cilium basal body. Required for centrosome assembly and function. Essential for the correct localization of several centrosomal proteins including CEP250, CETN3, PCNT and NEK2. Required to anchor microtubules to the centrosome. Also involved in cilium biogenesis by recruiting the BBSome, a ciliary protein complex involved in cilium biogenesis, to the centriolar satellites. Recruits the tubulin polyglutamylase complex (TPGC) to centriolar satellites. This chain is Pericentriolar material 1 protein, found in Homo sapiens (Human).